The following is a 324-amino-acid chain: DNA-directed RNA polymerase subunit alpha (324 aa).

Residues 1-228 (MIEIQKPTIR…EHFNLFTDLS (228 aa)) are alpha N-terminal domain (alpha-NTD). Positions 245-324 (RNKLLDMTIE…STPKGEEEEK (80 aa)) are alpha C-terminal domain (alpha-CTD).

This sequence belongs to the RNA polymerase alpha chain family. Homodimer. The RNAP catalytic core consists of 2 alpha, 1 beta, 1 beta' and 1 omega subunit. When a sigma factor is associated with the core the holoenzyme is formed, which can initiate transcription.

It catalyses the reaction RNA(n) + a ribonucleoside 5'-triphosphate = RNA(n+1) + diphosphate. Functionally, DNA-dependent RNA polymerase catalyzes the transcription of DNA into RNA using the four ribonucleoside triphosphates as substrates. This Caldicellulosiruptor saccharolyticus (strain ATCC 43494 / DSM 8903 / Tp8T 6331) protein is DNA-directed RNA polymerase subunit alpha.